A 462-amino-acid chain; its full sequence is tRNA(Ile)-lysidine synthase (462 aa).

An ATP-binding site is contributed by 31–36 (SGGRDS).

Belongs to the tRNA(Ile)-lysidine synthase family.

It is found in the cytoplasm. The enzyme catalyses cytidine(34) in tRNA(Ile2) + L-lysine + ATP = lysidine(34) in tRNA(Ile2) + AMP + diphosphate + H(+). Functionally, ligates lysine onto the cytidine present at position 34 of the AUA codon-specific tRNA(Ile) that contains the anticodon CAU, in an ATP-dependent manner. Cytidine is converted to lysidine, thus changing the amino acid specificity of the tRNA from methionine to isoleucine. This Ralstonia nicotianae (strain ATCC BAA-1114 / GMI1000) (Ralstonia solanacearum) protein is tRNA(Ile)-lysidine synthase.